The sequence spans 423 residues: Adenylosuccinate synthetase (423 aa).

GTP contacts are provided by residues 12–18 (GDEGKGK) and 40–42 (GHT). The active-site Proton acceptor is the aspartate 13. Mg(2+) contacts are provided by aspartate 13 and glycine 40. Residues 13–16 (DEGK), 38–41 (NAGH), threonine 129, arginine 143, glutamine 224, threonine 239, and arginine 303 contribute to the IMP site. Histidine 41 (proton donor) is an active-site residue. Position 299 to 305 (299 to 305 (SVTGRQR)) interacts with substrate. GTP contacts are provided by residues arginine 305, 331–333 (KGD), and 412–414 (SVG).

This sequence belongs to the adenylosuccinate synthetase family. As to quaternary structure, homodimer. The cofactor is Mg(2+).

Its subcellular location is the cytoplasm. The catalysed reaction is IMP + L-aspartate + GTP = N(6)-(1,2-dicarboxyethyl)-AMP + GDP + phosphate + 2 H(+). It participates in purine metabolism; AMP biosynthesis via de novo pathway; AMP from IMP: step 1/2. Its function is as follows. Plays an important role in the de novo pathway of purine nucleotide biosynthesis. Catalyzes the first committed step in the biosynthesis of AMP from IMP. The sequence is that of Adenylosuccinate synthetase from Flavobacterium psychrophilum (strain ATCC 49511 / DSM 21280 / CIP 103535 / JIP02/86).